We begin with the raw amino-acid sequence, 295 residues long: Glycine--tRNA ligase alpha subunit (295 aa).

This sequence belongs to the class-II aminoacyl-tRNA synthetase family. In terms of assembly, tetramer of two alpha and two beta subunits.

The protein localises to the cytoplasm. It catalyses the reaction tRNA(Gly) + glycine + ATP = glycyl-tRNA(Gly) + AMP + diphosphate. The polypeptide is Glycine--tRNA ligase alpha subunit (glyQ) (Bacillus subtilis (strain 168)).